A 424-amino-acid polypeptide reads, in one-letter code: D-inositol 3-phosphate glycosyltransferase (424 aa).

Residue H20 participates in 1D-myo-inositol 3-phosphate binding. UDP-N-acetyl-alpha-D-glucosamine contacts are provided by residues 26-27 (QP) and G34. Residues 31–36 (DAGGMN), K89, Y122, T146, and R166 each bind 1D-myo-inositol 3-phosphate. UDP-N-acetyl-alpha-D-glucosamine is bound by residues R240, K245, and M306. Mg(2+) is bound by residues Y315, R316, and A318. UDP-N-acetyl-alpha-D-glucosamine-binding residues include E328 and E336. T342 lines the Mg(2+) pocket.

This sequence belongs to the glycosyltransferase group 1 family. MshA subfamily. As to quaternary structure, homodimer.

The catalysed reaction is 1D-myo-inositol 3-phosphate + UDP-N-acetyl-alpha-D-glucosamine = 1D-myo-inositol 2-acetamido-2-deoxy-alpha-D-glucopyranoside 3-phosphate + UDP + H(+). Catalyzes the transfer of a N-acetyl-glucosamine moiety to 1D-myo-inositol 3-phosphate to produce 1D-myo-inositol 2-acetamido-2-deoxy-glucopyranoside 3-phosphate in the mycothiol biosynthesis pathway. The protein is D-inositol 3-phosphate glycosyltransferase of Kribbella flavida (strain DSM 17836 / JCM 10339 / NBRC 14399).